Consider the following 190-residue polypeptide: Peptide deformylase (190 aa).

C106 and H148 together coordinate Fe cation. E149 is an active-site residue. H152 is a Fe cation binding site.

It belongs to the polypeptide deformylase family. Fe(2+) serves as cofactor.

It carries out the reaction N-terminal N-formyl-L-methionyl-[peptide] + H2O = N-terminal L-methionyl-[peptide] + formate. Functionally, removes the formyl group from the N-terminal Met of newly synthesized proteins. Requires at least a dipeptide for an efficient rate of reaction. N-terminal L-methionine is a prerequisite for activity but the enzyme has broad specificity at other positions. In Methylacidiphilum infernorum (isolate V4) (Methylokorus infernorum (strain V4)), this protein is Peptide deformylase.